The chain runs to 217 residues: Small ribosomal subunit protein uS3 (217 aa).

Residues 40-110 enclose the KH type-2 domain; that stretch reads IRDLINKWFN…EVYINIHEVR (71 aa).

The protein belongs to the universal ribosomal protein uS3 family. Part of the 30S ribosomal subunit. Forms a tight complex with proteins S10 and S14.

In terms of biological role, binds the lower part of the 30S subunit head. Binds mRNA in the 70S ribosome, positioning it for translation. The chain is Small ribosomal subunit protein uS3 from Rickettsia prowazekii (strain Madrid E).